Here is a 384-residue protein sequence, read N- to C-terminus: MAKHLFTSESVSEGHPDKIADQISDAVLDAILEQDPKARVACETYVKTGMVLVGGEITTSAWVDIEEITRNTVREIGYVHSDMGFDANSCAVLSAIGKQSPDINQGVDRTDPLEQGAGDQGLMFGYATNETDVLMPAPVTYAHRLVQRQAEVRKNGTLPWLRPDAKSQVTFQYDGGKIVGIDAVVLSTQHAEDIEQNVLHDAVMEEIIKPVLPAEWLNESTKYFINPTGRFVIGGPMGDCGLTGRKIIVDTYGGMARHGGGAFSGKDPSKVDRSAAYAARYVAKNIVAAGLADRCEIQVSYAIGVAEPTSIMVETFGTEKIATEQLTLLVREFFDLRPYGLIQMLDLLHPIYKETAAYGHFGREHFPWEKTDKAQLLRDAAGLK.

Histidine 15 contacts ATP. Aspartate 17 contributes to the Mg(2+) binding site. Glutamate 43 provides a ligand contact to K(+). Residues glutamate 56 and glutamine 99 each coordinate L-methionine. The interval 99–109 (QSPDINQGVDR) is flexible loop. ATP contacts are provided by residues 164–166 (DAK), 230–231 (RF), aspartate 239, 245–246 (RK), alanine 262, and lysine 266. Aspartate 239 serves as a coordination point for L-methionine. Lysine 270 contributes to the L-methionine binding site.

This sequence belongs to the AdoMet synthase family. As to quaternary structure, homotetramer; dimer of dimers. The cofactor is Mg(2+). K(+) serves as cofactor.

It is found in the cytoplasm. The catalysed reaction is L-methionine + ATP + H2O = S-adenosyl-L-methionine + phosphate + diphosphate. Its pathway is amino-acid biosynthesis; S-adenosyl-L-methionine biosynthesis; S-adenosyl-L-methionine from L-methionine: step 1/1. Catalyzes the formation of S-adenosylmethionine (AdoMet) from methionine and ATP. The overall synthetic reaction is composed of two sequential steps, AdoMet formation and the subsequent tripolyphosphate hydrolysis which occurs prior to release of AdoMet from the enzyme. The protein is S-adenosylmethionine synthase of Cronobacter sakazakii (strain ATCC BAA-894) (Enterobacter sakazakii).